Reading from the N-terminus, the 391-residue chain is ATP-sensitive inward rectifier potassium channel 1 (391 aa).

Topologically, residues 1–77 (MNASSRNVFD…IWTTVLDLKW (77 aa)) are cytoplasmic. Ser-44 carries the post-translational modification Phosphoserine; by SGK1. The helical transmembrane segment at 78–102 (RYKMTIFITAFLGSWFFFGLLWYAV) threads the bilayer. Topologically, residues 103-127 (AYIHKDLPEFHPSANHTPCVENING) are extracellular. Asn-117 carries an N-linked (GlcNAc...) asparagine glycan. The segment at residues 128 to 139 (LTSAFLFSLETQ) is an intramembrane region (helical; Pore-forming). Residues 140 to 146 (VTIGYGF) constitute an intramembrane region (pore-forming). Residues 141-146 (TIGYGF) carry the Selectivity filter motif. Residues 147–155 (RCVTEQCAT) are Extracellular-facing. Residues 156-177 (AIFLLIFQSILGVIINSFMCGA) traverse the membrane as a helical segment. Over 178–391 (ILAKISRPKK…EVNETDDTKM (214 aa)) the chain is Cytoplasmic. Residues 180–207 (AKISRPKKRAKTITFSKNAVISKRGGKL) are polyphosphoinositide (PIP2)-binding. Position 223-230 (223-230 (GSHIYGKL)) interacts with ATP.

This sequence belongs to the inward rectifier-type potassium channel (TC 1.A.2.1) family. KCNJ1 subfamily. Interacts with SGK1 and SLC9A3R2/NHERF2. Post-translationally, phosphorylation at Ser-44 by SGK1 is necessary for its expression at the cell membrane. In terms of tissue distribution, in the kidney and pancreatic islets. Lower levels in skeletal muscle, pancreas, spleen, brain, heart and liver.

The protein localises to the cell membrane. It catalyses the reaction K(+)(in) = K(+)(out). Inhibited by WNK3. Activated by phosphatidylinositol 4,5 biphosphate (PtdIns(4,5)P2). In terms of biological role, inward rectifier potassium channels are characterized by a greater tendency to allow potassium to flow into the cell rather than out of it. Their voltage dependence is regulated by the concentration of extracellular potassium; as external potassium is raised, the voltage range of the channel opening shifts to more positive voltages. The inward rectification is mainly due to the blockage of outward current by internal magnesium. This channel is activated by internal ATP and can be blocked by external barium. In the kidney, probably plays a major role in potassium homeostasis. In Homo sapiens (Human), this protein is ATP-sensitive inward rectifier potassium channel 1 (KCNJ1).